A 218-amino-acid polypeptide reads, in one-letter code: Peptide deformylase (218 aa).

Residues Cys130 and His172 each coordinate Fe cation. The active site involves Glu173. His176 contributes to the Fe cation binding site.

It belongs to the polypeptide deformylase family. The cofactor is Fe(2+).

It catalyses the reaction N-terminal N-formyl-L-methionyl-[peptide] + H2O = N-terminal L-methionyl-[peptide] + formate. Functionally, removes the formyl group from the N-terminal Met of newly synthesized proteins. Requires at least a dipeptide for an efficient rate of reaction. N-terminal L-methionine is a prerequisite for activity but the enzyme has broad specificity at other positions. This Bifidobacterium adolescentis (strain ATCC 15703 / DSM 20083 / NCTC 11814 / E194a) protein is Peptide deformylase.